The primary structure comprises 255 residues: MVDPVAALCNYNVLEVIFSYLELEDLNHCSQVCKSWYHFLNDENSDVWRWHCLNKLPKEALKSDLLASVSTYKTKLRAYFHAWSPNDCSRNVYIKPNGFTLHRNPVAQSTDAARSKIGFRHGRHTWEVIWEGPLGTVAVIGISTKEAALQCHGYVALLGSDDQSWGWNLVENHLLHNGDMQGSYPLLNNAPKYQVGERIRVILDCEDNTLSFEKNYEFLGVAFRGLPDKKLYPTVSAVYGNTEVSMVYLGTPLDG.

Residues 3-51 form the F-box domain; that stretch reads DPVAALCNYNVLEVIFSYLELEDLNHCSQVCKSWYHFLNDENSDVWRWH. A B30.2/SPRY domain is found at 61–253; it reads LKSDLLASVS…VSMVYLGTPL (193 aa).

It belongs to the FBXO45/Fsn family. Component of an E3 ubiquitin ligase complex composed of hiw and Fsn.

The protein localises to the synapse. It functions in the pathway protein modification; protein ubiquitination. In terms of biological role, required in the presynaptic motoneuron to down-regulate the levels of wnd and restrain synaptic terminal growth at the neuromuscular junction (NMJ). This chain is F-box/SPRY domain-containing protein 1, found in Drosophila yakuba (Fruit fly).